The chain runs to 502 residues: MAISFLCFCLITLASLIFFAKKIKHLKWNLPPSPPKFPVIGNLHQIGELPHRSLQHLAERYGPVMLLHFGFVPVTVVSSREAAEEVLRTHDLDCCSRPKLVGTRLLSRNFKDVCFTPYGNEWKARRKFALRELFCLKKVQSFRHIREEECNFLVKQLSESAVNRSPVDLSKSLFWLTASIFFRVALGQNFHESNFIDKEKIEELVFEAETALASFTCSDFFPVAGLGWLVDWFSGQHKRLNDVFYKLDALFQHVIDDHLNPGRSKEHEDIIDSMLDAIHKEGKDSSLELIIDHIKGFLANIFLAGIDTGALTMIWAMTELVKNPKLIKKVQGEIREQLGSNKARITEEDIDKVPYLKMVIKETFRLHPAAPLILPRETMAHIKVQGYDIPPKRRILVNVSAIGRDPKLWTNPEEFDPERFMDSSVDYRGQHYELLPFGSGRRICPGMPMGIAAVELGLLNLLYFFDWKLPDGMTHKDIDTEEAGTLTIVKKVPLQLVPVRVQ.

A helical membrane pass occupies residues 1–21 (MAISFLCFCLITLASLIFFAK). A heme-binding site is contributed by C444.

Belongs to the cytochrome P450 family. Heme is required as a cofactor.

The protein localises to the membrane. In Arabidopsis thaliana (Mouse-ear cress), this protein is Cytochrome P450 71B20 (CYP71B20).